A 299-amino-acid polypeptide reads, in one-letter code: uncharacterized protein (299 aa).

The chain crosses the membrane as a helical span at residues 4–20; sequence LFFIFVMLIVLLCGCTS.

Its subcellular location is the membrane. This is an uncharacterized protein from Methanocaldococcus jannaschii (strain ATCC 43067 / DSM 2661 / JAL-1 / JCM 10045 / NBRC 100440) (Methanococcus jannaschii).